Reading from the N-terminus, the 248-residue chain is Triosephosphate isomerase (248 aa).

9–11 provides a ligand contact to substrate; that stretch reads NWK. Catalysis depends on His-92, which acts as the Electrophile. Glu-164 (proton acceptor) is an active-site residue. Residues Gly-170, Ser-210, and 231-232 contribute to the substrate site; that span reads GG.

The protein belongs to the triosephosphate isomerase family. Homodimer.

It is found in the cytoplasm. The enzyme catalyses D-glyceraldehyde 3-phosphate = dihydroxyacetone phosphate. The protein operates within carbohydrate biosynthesis; gluconeogenesis. Its pathway is carbohydrate degradation; glycolysis; D-glyceraldehyde 3-phosphate from glycerone phosphate: step 1/1. In terms of biological role, involved in the gluconeogenesis. Catalyzes stereospecifically the conversion of dihydroxyacetone phosphate (DHAP) to D-glyceraldehyde-3-phosphate (G3P). In Mycoplasma capricolum subsp. capricolum (strain California kid / ATCC 27343 / NCTC 10154), this protein is Triosephosphate isomerase.